A 287-amino-acid polypeptide reads, in one-letter code: Pyridoxal 5'-phosphate synthase subunit PdxS (287 aa).

A D-ribose 5-phosphate-binding site is contributed by Asp21. Lys78 functions as the Schiff-base intermediate with D-ribose 5-phosphate in the catalytic mechanism. Gly150 provides a ligand contact to D-ribose 5-phosphate. Arg162 provides a ligand contact to D-glyceraldehyde 3-phosphate. D-ribose 5-phosphate is bound by residues Gly211 and 232-233 (GS).

It belongs to the PdxS/SNZ family. As to quaternary structure, in the presence of PdxT, forms a dodecamer of heterodimers.

It catalyses the reaction aldehydo-D-ribose 5-phosphate + D-glyceraldehyde 3-phosphate + L-glutamine = pyridoxal 5'-phosphate + L-glutamate + phosphate + 3 H2O + H(+). Its pathway is cofactor biosynthesis; pyridoxal 5'-phosphate biosynthesis. Functionally, catalyzes the formation of pyridoxal 5'-phosphate from ribose 5-phosphate (RBP), glyceraldehyde 3-phosphate (G3P) and ammonia. The ammonia is provided by the PdxT subunit. Can also use ribulose 5-phosphate and dihydroxyacetone phosphate as substrates, resulting from enzyme-catalyzed isomerization of RBP and G3P, respectively. This is Pyridoxal 5'-phosphate synthase subunit PdxS from Tropheryma whipplei (strain TW08/27) (Whipple's bacillus).